Reading from the N-terminus, the 298-residue chain is 4-diphosphocytidyl-2-C-methyl-D-erythritol kinase (298 aa).

Lys19 is an active-site residue. 106–116 (PVASGIGGGSA) contributes to the ATP binding site. Asp148 is a catalytic residue.

Belongs to the GHMP kinase family. IspE subfamily.

It catalyses the reaction 4-CDP-2-C-methyl-D-erythritol + ATP = 4-CDP-2-C-methyl-D-erythritol 2-phosphate + ADP + H(+). It functions in the pathway isoprenoid biosynthesis; isopentenyl diphosphate biosynthesis via DXP pathway; isopentenyl diphosphate from 1-deoxy-D-xylulose 5-phosphate: step 3/6. Functionally, catalyzes the phosphorylation of the position 2 hydroxy group of 4-diphosphocytidyl-2C-methyl-D-erythritol. The polypeptide is 4-diphosphocytidyl-2-C-methyl-D-erythritol kinase (Rhizobium leguminosarum bv. trifolii (strain WSM2304)).